The chain runs to 305 residues: GPI-anchored hemophore cfmA (305 aa).

The first 18 residues, 1–18 (MKASVSLLLLSAASMASA), serve as a signal peptide directing secretion. One can recognise a CFEM domain in the interval 19 to 111 (AMSVSQCAQM…GSGSGSDSGS (93 aa)). Disulfide bonds link Cys25–Cys68, Cys29–Cys63, Cys42–Cys49, and Cys51–Cys84. Asp46 is a heme binding site. The segment at 92 to 287 (TATGAGGSSS…STGNVAPRGA (196 aa)) is disordered. Gly residues predominate over residues 95–149 (GAGGSSSGSGSGSDSGSGSGSGSGSGSGSGSGSGSSSGSGSGSGSGSGSGSGSNS). 3 stretches are compositionally biased toward low complexity: residues 150 to 186 (GSGS…NSTT), 196 to 259 (GASS…TATG), and 267 to 287 (GSAS…PRGA). N-linked (GlcNAc...) asparagine glycosylation is found at Asn183, Asn203, Asn237, Asn243, and Asn275. Ser276 carries the GPI-like-anchor amidated serine lipid modification. The propeptide at 277–305 (SSTGNVAPRGAVVGSGAVGALALAALIIL) is removed in mature form.

It belongs to the RBT5 family. The GPI-like anchor contains a phosphoceramide lipid group. Post-translationally, the GPI-anchor is attached to the protein in the endoplasmic reticulum and serves to target the protein to the cell surface. There, the glucosamine-inositol phospholipid moiety is cleaved off and the GPI-modified mannoprotein is covalently attached via its lipidless GPI glycan remnant to the 1,6-beta-glucan of the outer cell wall layer.

Its subcellular location is the secreted. It localises to the cell wall. It is found in the cell membrane. In terms of biological role, GPI-anchored cell wall protein involved in stabilizing the cell wall. Not implicated in virulence, heme uptake and biofilm formation. The chain is GPI-anchored hemophore cfmA from Aspergillus fumigatus (strain ATCC MYA-4609 / CBS 101355 / FGSC A1100 / Af293) (Neosartorya fumigata).